The primary structure comprises 619 residues: Guanylate cyclase soluble subunit beta-1 (619 aa).

His-105 is a heme binding site. The Guanylate cyclase domain maps to 421–554; the sequence is TILFSGIVGF…NTVNLTSRTE (134 aa).

The protein belongs to the adenylyl cyclase class-4/guanylyl cyclase family. The active enzyme is formed by a heterodimer of an alpha and a beta subunit. Homotetramer; dimer of dimers (in vitro). Heterodimer with GUCY1A1. Can also form inactive homodimers in vitro. It depends on heme as a cofactor. In terms of tissue distribution, lung and brain.

The protein localises to the cytoplasm. It carries out the reaction GTP = 3',5'-cyclic GMP + diphosphate. Activated by nitric oxide in the presence of magnesium or manganese ions. Mediates responses to nitric oxide (NO) by catalyzing the biosynthesis of the signaling molecule cGMP. The sequence is that of Guanylate cyclase soluble subunit beta-1 (Gucy1b1) from Rattus norvegicus (Rat).